Here is a 484-residue protein sequence, read N- to C-terminus: MKFIIKLFPEIMIKSESVRKRFVKILTGNIRNVLNKYDDTVAVVKHWDYIEVRSKNIENRILLVELLGRIPGIHHFLEVEEKPFVTLHDIFEQTLSDVATQIENKTFCVRVKRKGKHDFSSLDAERYIGGGLNQAVASAKVQLSKPDVTVRIDIENDKMMLIKARHQGIGGYPIGTQEDVLSLISGGFDSGVSSYMLIRRGSRVHYCFFNLGGATHEIGVKQMAYHIWKRFSGSHKVRFVAINFEQVVAEILEKVDNGQMGVVLKRMMVRAASKVAQRFGIQAIVTGEALGQVSSQTLTNLRLIDEAAESLVLRPLITHDKEQIIAKAKEIGTEDIAKSMPEFCGVISKSPTVKAVKEKIEQEESYFDFSVLESAVQNAQYLDIRQIAEQTKKEVFEVDEITVLSANDVILDIRSPEEVDDKPLEISGQNIILMPFYKLSSHFAELDQSKNYVLYCERGVMSKLQALYLREKGFDNVKVLNKIS.

In terms of domain architecture, THUMP spans 61–165; it reads ILLVELLGRI…NDKMMLIKAR (105 aa). ATP contacts are provided by residues 183 to 184, Lys-265, Gly-287, and Gln-296; that span reads LI. The cysteines at positions 344 and 456 are disulfide-linked. Residues 404 to 484 enclose the Rhodanese domain; it reads LSANDVILDI…DNVKVLNKIS (81 aa). Cys-456 (cysteine persulfide intermediate) is an active-site residue.

This sequence belongs to the ThiI family.

The protein localises to the cytoplasm. It catalyses the reaction [ThiI sulfur-carrier protein]-S-sulfanyl-L-cysteine + a uridine in tRNA + 2 reduced [2Fe-2S]-[ferredoxin] + ATP + H(+) = [ThiI sulfur-carrier protein]-L-cysteine + a 4-thiouridine in tRNA + 2 oxidized [2Fe-2S]-[ferredoxin] + AMP + diphosphate. It carries out the reaction [ThiS sulfur-carrier protein]-C-terminal Gly-Gly-AMP + S-sulfanyl-L-cysteinyl-[cysteine desulfurase] + AH2 = [ThiS sulfur-carrier protein]-C-terminal-Gly-aminoethanethioate + L-cysteinyl-[cysteine desulfurase] + A + AMP + 2 H(+). The protein operates within cofactor biosynthesis; thiamine diphosphate biosynthesis. Functionally, catalyzes the ATP-dependent transfer of a sulfur to tRNA to produce 4-thiouridine in position 8 of tRNAs, which functions as a near-UV photosensor. Also catalyzes the transfer of sulfur to the sulfur carrier protein ThiS, forming ThiS-thiocarboxylate. This is a step in the synthesis of thiazole, in the thiamine biosynthesis pathway. The sulfur is donated as persulfide by IscS. This chain is tRNA sulfurtransferase, found in Histophilus somni (strain 129Pt) (Haemophilus somnus).